The chain runs to 303 residues: Acetylglutamate kinase (303 aa).

Substrate is bound by residues 76 to 77 (GG), Arg-98, and Asn-192.

This sequence belongs to the acetylglutamate kinase family. ArgB subfamily.

It is found in the cytoplasm. It carries out the reaction N-acetyl-L-glutamate + ATP = N-acetyl-L-glutamyl 5-phosphate + ADP. The protein operates within amino-acid biosynthesis; L-arginine biosynthesis; N(2)-acetyl-L-ornithine from L-glutamate: step 2/4. Functionally, catalyzes the ATP-dependent phosphorylation of N-acetyl-L-glutamate. The protein is Acetylglutamate kinase of Chlorobium phaeobacteroides (strain DSM 266 / SMG 266 / 2430).